The following is a 579-amino-acid chain: CTP synthase (579 aa).

In terms of domain architecture, Glutamine amidotransferase type-1 spans tyrosine 310 to glutamine 558. Residues cysteine 402, histidine 531, and glutamate 533 each act as for GATase activity in the active site.

This sequence belongs to the CTP synthase family.

It catalyses the reaction UTP + L-glutamine + ATP + H2O = CTP + L-glutamate + ADP + phosphate + 2 H(+). It functions in the pathway pyrimidine metabolism; CTP biosynthesis via de novo pathway; CTP from UDP: step 2/2. Functionally, catalyzes the ATP-dependent amination of UTP to CTP with either L-glutamine or ammonia as the source of nitrogen. This is CTP synthase (pyr-7) from Neurospora crassa (strain ATCC 24698 / 74-OR23-1A / CBS 708.71 / DSM 1257 / FGSC 987).